The following is a 373-amino-acid chain: 3',5'-bisphosphate nucleotidase AHL (373 aa).

Asp52 functions as the Proton acceptor in the catalytic mechanism. Residues Glu77, Asp144, Val146, and Asp147 each coordinate Mg(2+). The Proton acceptor role is filled by Thr149. Adenosine 3',5'-bisphosphate is bound by residues Thr149, Ser281, Lys284, Lys298, and Asp310. 4 residues coordinate AMP: Ser281, Lys284, Lys298, and Asp310. Asp310 serves as a coordination point for Mg(2+).

This sequence belongs to the inositol monophosphatase superfamily. It depends on Mg(2+) as a cofactor. As to expression, expressed in roots, leaves, stems, flowers and siliques.

The enzyme catalyses adenosine 3',5'-bisphosphate + H2O = AMP + phosphate. It catalyses the reaction 3'-phosphoadenylyl sulfate + H2O = adenosine 5'-phosphosulfate + phosphate. With respect to regulation, inhibited by Li(+) (IC(50)=10 mM), Na(+) (IC(50)=50 mM) and Ca(2+) (IC(50)=0.06 mM). Functionally, phosphatase that converts adenosine 3'-phosphate 5'-phosphosulfate (PAPS) to adenosine 5'-phosphosulfate (APS) and 3'-phosphoadenosine 5'-phosphate (3'-PAP) to AMP. May regulate the flux of sulfur in the sulfur-activation pathway by converting PAPS to APS. Prevents both the toxicity of PAP on RNA processing enzymes as well as the product inhibition by PAP of sulfate conjugation. This is 3',5'-bisphosphate nucleotidase AHL from Arabidopsis thaliana (Mouse-ear cress).